The following is a 431-amino-acid chain: Enolase (431 aa).

Residue glutamine 167 coordinates (2R)-2-phosphoglycerate. The active-site Proton donor is the glutamate 209. The Mg(2+) site is built by aspartate 246, glutamate 289, and aspartate 316. (2R)-2-phosphoglycerate-binding residues include lysine 341, arginine 370, serine 371, and lysine 392. The Proton acceptor role is filled by lysine 341.

The protein belongs to the enolase family. Component of the RNA degradosome, a multiprotein complex involved in RNA processing and mRNA degradation. The cofactor is Mg(2+).

It localises to the cytoplasm. It is found in the secreted. Its subcellular location is the cell surface. It carries out the reaction (2R)-2-phosphoglycerate = phosphoenolpyruvate + H2O. It participates in carbohydrate degradation; glycolysis; pyruvate from D-glyceraldehyde 3-phosphate: step 4/5. In terms of biological role, catalyzes the reversible conversion of 2-phosphoglycerate (2-PG) into phosphoenolpyruvate (PEP). It is essential for the degradation of carbohydrates via glycolysis. This Shewanella woodyi (strain ATCC 51908 / MS32) protein is Enolase.